Consider the following 195-residue polypeptide: Sec-independent protein translocase protein TatB (195 aa).

A helical transmembrane segment spans residues 1-21; the sequence is MFDIGFSELVLIFIVGLVVLG. The interval 166-195 is disordered; the sequence is DESQFAAYYPPDDDLASPTPSQPQDKQNVS. The segment covering 183 to 195 has biased composition (polar residues); sequence PTPSQPQDKQNVS.

Belongs to the TatB family. The Tat system comprises two distinct complexes: a TatABC complex, containing multiple copies of TatA, TatB and TatC subunits, and a separate TatA complex, containing only TatA subunits. Substrates initially bind to the TatABC complex, which probably triggers association of the separate TatA complex to form the active translocon.

The protein localises to the cell inner membrane. In terms of biological role, part of the twin-arginine translocation (Tat) system that transports large folded proteins containing a characteristic twin-arginine motif in their signal peptide across membranes. Together with TatC, TatB is part of a receptor directly interacting with Tat signal peptides. TatB may form an oligomeric binding site that transiently accommodates folded Tat precursor proteins before their translocation. The protein is Sec-independent protein translocase protein TatB of Actinobacillus pleuropneumoniae serotype 5b (strain L20).